The sequence spans 64 residues: Large ribosomal subunit protein bL35 (64 aa).

This sequence belongs to the bacterial ribosomal protein bL35 family.

This chain is Large ribosomal subunit protein bL35, found in Wolinella succinogenes (strain ATCC 29543 / DSM 1740 / CCUG 13145 / JCM 31913 / LMG 7466 / NCTC 11488 / FDC 602W) (Vibrio succinogenes).